We begin with the raw amino-acid sequence, 1377 residues long: MEVLMAERADLVFHNKVIDGAAMKRLISRLIDHFGMAYTSHILDQVKTLGFQQATTTSISLGIDDLLTIPSKGWLVQDAEQQSLILEKHHHYGNVHAVEKLRQSIEIWYATSEYLRQEMHPNFRMTDPSNPVHIMSFSGARGNASQVHQLVGMRGLMSDPQGQMIDLPIQSNLREGLSLTEYIISCYGARKGVVDTAVRTSDAGYLTRRLVEVVQHIVVRRTDCGTIRGISVSPRNGMTERIWIQTLIGRVLAYDIYMGPRCIAARNQDIGIGLVNRFITFRAQPIYIRTPFLCRSTSWICRLCYGRSPAHGDLVELGEAVGIIAGQSIGEPGTQLTLRTFHTGGVFTGGTAEHVRAPFNGKIQFNEDLVHPTRTRHGHPAFLCYTDLYVTIESHDILHNVNIPQKSFLLVQNDQYVESEQVIAEIRAGTSTFNLKVKEKVRKHIYSDSEGEMHWSTDVYHAPEYTYGNVHLLPKTSHLWILSGGLCRSSIVPFSLHKDQDQMNVHSLSVEQRYISDLSVTNVRVRHKLFSSDSSGKKGGRAPDYSGPDRIISNGHWNFIYPAILHENSDLLAKRRRNRFIIPFQSDQEREKELMPRSGISIEIPINGILRRNSILAYFDDPRYRRSSSGITKYGTIGVDSIVKKEDLIEYRRAKEFRPKYQMKVDRFFFIPEEVHILPASSPVMVRNNSIIGVNTRIALNTRSRVGGLVRVERKKKRIELKIFSGDIHFPGETDKISRHSGILIPPGTGKKNVKESKKWKNWIYVQRITPTKKKYFVLVRPVVTYEIADGINLETLFPQDPLQERDNVQLRVVNYILYGNGKPIRGISHTSLQLVRTCLVLNWDQDRNGSIEEVHASFVEVRANGLIRDFLKIDLVKSPILYSGKRNDTTSSGFIPNNGSDRTNINPFYFKARIQSLTQHQGTIRTLLNRNKECQSFLILSSSDCSRIGSFNGSKSHKVTKESITIKEDPTIPIRNSLGPLGTVPKIANFDSSYYLITHNQILLNKYLSLDNLKQTFQVLKYYLMDENGRIYNPDPRSNIIFNPFDLNWCFLPHDYCEETSTIINPGQFICENVCISKYGPHIKSGQILIVRVDSLVIRSAKPHLATPGATVHGHCGEILYEGDTLVTFIYEKSRSGDITQGLPKVEQVLEARSIDSISMNLEKRVEGWNERITKILGIPWGFLIGAELTIAQSRISLVNKIQKVYRSQGVQIHNRHIEIIVRQITSRVLVSEDGMSNVFSPGELIGLLRAERTGRALEEAICYRAILLGITRASLNTQSFISEASFQETARVLAKAALRGRIDWLKGLKENVVLGGMMPVGTGFKGLVRRSRQHNNIPLEIKKKNLFEGEMRDILFHHRELFDSCIPNNFPDTLE.

The Zn(2+) site is built by C224, C294, C301, and C304.

The protein belongs to the RNA polymerase beta' chain family. RpoC2 subfamily. In plastids the minimal PEP RNA polymerase catalytic core is composed of four subunits: alpha, beta, beta', and beta''. When a (nuclear-encoded) sigma factor is associated with the core the holoenzyme is formed, which can initiate transcription. Requires Zn(2+) as cofactor.

Its subcellular location is the plastid. The protein localises to the chloroplast. It carries out the reaction RNA(n) + a ribonucleoside 5'-triphosphate = RNA(n+1) + diphosphate. Functionally, DNA-dependent RNA polymerase catalyzes the transcription of DNA into RNA using the four ribonucleoside triphosphates as substrates. The chain is DNA-directed RNA polymerase subunit beta'' from Calycanthus floridus var. glaucus (Eastern sweetshrub).